Here is a 253-residue protein sequence, read N- to C-terminus: Imidazole glycerol phosphate synthase subunit HisF (253 aa).

Residues Asp11 and Asp130 contribute to the active site.

It belongs to the HisA/HisF family. In terms of assembly, heterodimer of HisH and HisF.

It localises to the cytoplasm. The catalysed reaction is 5-[(5-phospho-1-deoxy-D-ribulos-1-ylimino)methylamino]-1-(5-phospho-beta-D-ribosyl)imidazole-4-carboxamide + L-glutamine = D-erythro-1-(imidazol-4-yl)glycerol 3-phosphate + 5-amino-1-(5-phospho-beta-D-ribosyl)imidazole-4-carboxamide + L-glutamate + H(+). Its pathway is amino-acid biosynthesis; L-histidine biosynthesis; L-histidine from 5-phospho-alpha-D-ribose 1-diphosphate: step 5/9. Its function is as follows. IGPS catalyzes the conversion of PRFAR and glutamine to IGP, AICAR and glutamate. The HisF subunit catalyzes the cyclization activity that produces IGP and AICAR from PRFAR using the ammonia provided by the HisH subunit. This Geotalea daltonii (strain DSM 22248 / JCM 15807 / FRC-32) (Geobacter daltonii) protein is Imidazole glycerol phosphate synthase subunit HisF.